A 281-amino-acid polypeptide reads, in one-letter code: Homoserine kinase (281 aa).

Residue 83–93 (PVSSGLGSSAA) participates in ATP binding.

This sequence belongs to the GHMP kinase family. Homoserine kinase subfamily.

The protein localises to the cytoplasm. The catalysed reaction is L-homoserine + ATP = O-phospho-L-homoserine + ADP + H(+). It functions in the pathway amino-acid biosynthesis; L-threonine biosynthesis; L-threonine from L-aspartate: step 4/5. Functionally, catalyzes the ATP-dependent phosphorylation of L-homoserine to L-homoserine phosphate. In Thermotoga petrophila (strain ATCC BAA-488 / DSM 13995 / JCM 10881 / RKU-1), this protein is Homoserine kinase.